The sequence spans 979 residues: Disks large-associated protein 3 (979 aa).

A compositionally biased stretch (basic and acidic residues) spans methionine 1 to serine 10. Disordered regions lie at residues methionine 1 to glutamine 20, alanine 52 to glycine 95, phenylalanine 136 to arginine 169, alanine 182 to glycine 291, alanine 400 to serine 429, and phenylalanine 537 to serine 581. Serine 58 carries the post-translational modification Phosphoserine. Positions proline 73 to serine 86 are enriched in gly residues. A compositionally biased stretch (basic and acidic residues) spans proline 190–glycine 202. Residues arginine 203 to glycine 218 show a composition bias toward gly residues. Positions threonine 221 to aspartate 246 are enriched in basic residues. Residues serine 406, serine 409, serine 412, and serine 416 each carry the phosphoserine modification. The segment covering alanine 540–glutamine 549 has biased composition (pro residues). Phosphoserine is present on residues serine 643 and serine 645. Disordered regions lie at residues glutamate 741–proline 790 and glutamate 908–arginine 940. 2 stretches are compositionally biased toward basic and acidic residues: residues glycine 769 to serine 779 and proline 927 to arginine 940. A phosphoserine mark is found at serine 932, serine 935, and serine 967.

This sequence belongs to the SAPAP family. Interacts with DLG4/PSD-95.

The protein localises to the cell membrane. Its subcellular location is the postsynaptic density. The protein resides in the synapse. Functionally, may play a role in the molecular organization of synapses and neuronal cell signaling. Could be an adapter protein linking ion channel to the subsynaptic cytoskeleton. May induce enrichment of PSD-95/SAP90 at the plasma membrane. The protein is Disks large-associated protein 3 (DLGAP3) of Homo sapiens (Human).